The chain runs to 315 residues: MTKREYNSQPEMLEGAKSIGAGAATIASAGAAIGIGNVFSSLIHSVARNPSLATTTVLVVTLTLLGGVAAFYLHSFRLKGPLKKIIYLFLVFFIAVGISLIRIKAIHLLGLALPLLVPPLVWNAIGGGGEALPSTGPNGASSYSEWFTYTSDLEDSASSGRTSSSVNQPIQREQAGPSNALPEPAASPVAQQQDHLDQPFGEGGEREARAQEHDRISAEVETITSACENLEAAMVRKAHILLHQRGVTLGDPEDVKRALQLALHDDWEHDIDDRKRHFTVLRRDFGTARCERWNPFIDELRGLGNRQVNARHYVD.

3 helical membrane-spanning segments follow: residues 19-39 (IGAG…GNVF), 56-76 (TVLV…LHSF), and 81-101 (PLKK…ISLI). Residues 154–171 (EDSASSGRTSSSVNQPIQ) are compositionally biased toward polar residues. The interval 154 to 214 (EDSASSGRTS…EREARAQEHD (61 aa)) is disordered. Basic and acidic residues predominate over residues 203–214 (GGEREARAQEHD).

Belongs to the ATPase C chain family.

Its subcellular location is the mitochondrion membrane. This is an uncharacterized protein from Arabidopsis thaliana (Mouse-ear cress).